The sequence spans 336 residues: Probable allantoicase 2 (336 aa).

The protein belongs to the allantoicase family.

It catalyses the reaction allantoate + H2O = (S)-ureidoglycolate + urea. It functions in the pathway nitrogen metabolism; (S)-allantoin degradation; (S)-ureidoglycolate from allantoate (aminidohydrolase route): step 1/1. The sequence is that of Probable allantoicase 2 from Burkholderia mallei (strain ATCC 23344).